A 501-amino-acid polypeptide reads, in one-letter code: Aspartyl/glutamyl-tRNA(Asn/Gln) amidotransferase subunit B (501 aa).

The segment at 271–299 (VQETRHYQETDGSTSKGRPKETAEDYRYF) is disordered. Positions 288–299 (RPKETAEDYRYF) are enriched in basic and acidic residues.

Belongs to the GatB/GatE family. GatB subfamily. Heterotrimer of A, B and C subunits.

It catalyses the reaction L-glutamyl-tRNA(Gln) + L-glutamine + ATP + H2O = L-glutaminyl-tRNA(Gln) + L-glutamate + ADP + phosphate + H(+). It carries out the reaction L-aspartyl-tRNA(Asn) + L-glutamine + ATP + H2O = L-asparaginyl-tRNA(Asn) + L-glutamate + ADP + phosphate + 2 H(+). Its function is as follows. Allows the formation of correctly charged Asn-tRNA(Asn) or Gln-tRNA(Gln) through the transamidation of misacylated Asp-tRNA(Asn) or Glu-tRNA(Gln) in organisms which lack either or both of asparaginyl-tRNA or glutaminyl-tRNA synthetases. The reaction takes place in the presence of glutamine and ATP through an activated phospho-Asp-tRNA(Asn) or phospho-Glu-tRNA(Gln). This Corynebacterium diphtheriae (strain ATCC 700971 / NCTC 13129 / Biotype gravis) protein is Aspartyl/glutamyl-tRNA(Asn/Gln) amidotransferase subunit B.